Consider the following 221-residue polypeptide: N-acetyltransferase 8F1 (221 aa).

A helical transmembrane segment spans residues 53-73 (LVLVSGSWLLAVVCIFFLLLL). The 151-residue stretch at 69–219 (FLLLLLRFLA…RTIQLKYPFP (151 aa)) folds into the N-acetyltransferase domain.

Belongs to the camello family.

It is found in the membrane. In terms of biological role, may play a role in regulation of gastrulation. The chain is N-acetyltransferase 8F1 from Rattus norvegicus (Rat).